The sequence spans 176 residues: Ribosome maturation factor RimM (176 aa).

In terms of domain architecture, PRC barrel spans 93-170 (DGEYYHADLI…ELPTEIEGDT (78 aa)).

This sequence belongs to the RimM family. In terms of assembly, binds ribosomal protein uS19.

It localises to the cytoplasm. Functionally, an accessory protein needed during the final step in the assembly of 30S ribosomal subunit, possibly for assembly of the head region. Essential for efficient processing of 16S rRNA. May be needed both before and after RbfA during the maturation of 16S rRNA. It has affinity for free ribosomal 30S subunits but not for 70S ribosomes. The chain is Ribosome maturation factor RimM from Rhodopseudomonas palustris (strain BisB5).